The following is a 339-amino-acid chain: Anthranilate phosphoribosyltransferase (339 aa).

5-phospho-alpha-D-ribose 1-diphosphate-binding positions include Gly-79, 82–83, Thr-87, 89–92, 107–115, and Ser-119; these read GD, NVST, and KHGNRAVSS. Residue Gly-79 coordinates anthranilate. Residue Ser-91 coordinates Mg(2+). Asn-110 contributes to the anthranilate binding site. An anthranilate-binding site is contributed by Arg-165. Residues Asp-224 and Glu-225 each coordinate Mg(2+).

The protein belongs to the anthranilate phosphoribosyltransferase family. As to quaternary structure, homodimer. Mg(2+) serves as cofactor.

The enzyme catalyses N-(5-phospho-beta-D-ribosyl)anthranilate + diphosphate = 5-phospho-alpha-D-ribose 1-diphosphate + anthranilate. It functions in the pathway amino-acid biosynthesis; L-tryptophan biosynthesis; L-tryptophan from chorismate: step 2/5. Its function is as follows. Catalyzes the transfer of the phosphoribosyl group of 5-phosphorylribose-1-pyrophosphate (PRPP) to anthranilate to yield N-(5'-phosphoribosyl)-anthranilate (PRA). This chain is Anthranilate phosphoribosyltransferase, found in Geobacillus stearothermophilus (Bacillus stearothermophilus).